Consider the following 404-residue polypeptide: Cysteine desulfurase IscS (404 aa).

Residues 75–76 (AT), Asn155, Gln183, and 203–205 (SGH) each bind pyridoxal 5'-phosphate. Lys206 bears the N6-(pyridoxal phosphate)lysine mark. Thr243 is a pyridoxal 5'-phosphate binding site. The active-site Cysteine persulfide intermediate is Cys328. Cys328 provides a ligand contact to [2Fe-2S] cluster.

The protein belongs to the class-V pyridoxal-phosphate-dependent aminotransferase family. NifS/IscS subfamily. Homodimer. Forms a heterotetramer with IscU, interacts with other sulfur acceptors. Pyridoxal 5'-phosphate serves as cofactor.

The protein resides in the cytoplasm. The enzyme catalyses (sulfur carrier)-H + L-cysteine = (sulfur carrier)-SH + L-alanine. It participates in cofactor biosynthesis; iron-sulfur cluster biosynthesis. Master enzyme that delivers sulfur to a number of partners involved in Fe-S cluster assembly, tRNA modification or cofactor biosynthesis. Catalyzes the removal of elemental sulfur atoms from cysteine to produce alanine. Functions as a sulfur delivery protein for Fe-S cluster synthesis onto IscU, an Fe-S scaffold assembly protein, as well as other S acceptor proteins. The chain is Cysteine desulfurase IscS from Shewanella baltica (strain OS155 / ATCC BAA-1091).